We begin with the raw amino-acid sequence, 364 residues long: UDP-3-O-acylglucosamine N-acyltransferase (364 aa).

The active-site Proton acceptor is H257.

Belongs to the transferase hexapeptide repeat family. LpxD subfamily. As to quaternary structure, homotrimer.

It catalyses the reaction a UDP-3-O-[(3R)-3-hydroxyacyl]-alpha-D-glucosamine + a (3R)-hydroxyacyl-[ACP] = a UDP-2-N,3-O-bis[(3R)-3-hydroxyacyl]-alpha-D-glucosamine + holo-[ACP] + H(+). It functions in the pathway bacterial outer membrane biogenesis; LPS lipid A biosynthesis. Catalyzes the N-acylation of UDP-3-O-acylglucosamine using 3-hydroxyacyl-ACP as the acyl donor. Is involved in the biosynthesis of lipid A, a phosphorylated glycolipid that anchors the lipopolysaccharide to the outer membrane of the cell. In Paracoccus denitrificans (strain Pd 1222), this protein is UDP-3-O-acylglucosamine N-acyltransferase.